The sequence spans 281 residues: Arylamine N-acetyltransferase / N-hydroxyarylamine O-acetyltransferase (281 aa).

C69 serves as the catalytic Acyl-thioester intermediate. Active-site residues include H107 and D122.

This sequence belongs to the arylamine N-acetyltransferase family. In terms of assembly, monomer and homodimer.

Its subcellular location is the cytoplasm. The enzyme catalyses an arylamine + acetyl-CoA = an N-acetylarylamine + CoA. The catalysed reaction is an N-hydroxyarylamine + acetyl-CoA = an N-acetoxyarylamine + CoA. Its activity is regulated as follows. Inhibited by N-ethylmaleimide and iodoacetamide. Catalyzes both the acetyl-CoA-dependent N-acetylation of aromatic amines and the O-acetylation of N-hydroxyarylamines. In vitro, catalyzes the O-acetylation of N-hydroxy-Glu-P-1, and the N-acetylation of isoniazid and 2-aminofluorene. The protein is Arylamine N-acetyltransferase / N-hydroxyarylamine O-acetyltransferase (nhoA) of Salmonella typhimurium (strain LT2 / SGSC1412 / ATCC 700720).